A 150-amino-acid chain; its full sequence is 3-dehydroquinate dehydratase (150 aa).

Catalysis depends on Tyr26, which acts as the Proton acceptor. Substrate contacts are provided by Asn77, His83, and Asp90. The Proton donor role is filled by His103. Substrate contacts are provided by residues 104-105 and Arg114; that span reads LS.

It belongs to the type-II 3-dehydroquinase family. Homododecamer.

The catalysed reaction is 3-dehydroquinate = 3-dehydroshikimate + H2O. Its pathway is metabolic intermediate biosynthesis; chorismate biosynthesis; chorismate from D-erythrose 4-phosphate and phosphoenolpyruvate: step 3/7. Functionally, catalyzes a trans-dehydration via an enolate intermediate. The polypeptide is 3-dehydroquinate dehydratase (Erwinia tasmaniensis (strain DSM 17950 / CFBP 7177 / CIP 109463 / NCPPB 4357 / Et1/99)).